Here is a 329-residue protein sequence, read N- to C-terminus: GTPase Obg (329 aa).

Positions 1–159 (MQFIDQARIT…WFLQLELKLL (159 aa)) constitute an Obg domain. Residues 160–328 (AEVGIIGLPN…LLAQVWKELG (169 aa)) form the OBG-type G domain. Residues 166 to 173 (GLPNAGKS), 191 to 195 (FTTLV), 213 to 216 (DIPG), 280 to 283 (NKQE), and 309 to 311 (SAA) each bind ATP. Mg(2+) contacts are provided by S173 and T193.

This sequence belongs to the TRAFAC class OBG-HflX-like GTPase superfamily. OBG GTPase family. Monomer. Requires Mg(2+) as cofactor.

The protein resides in the cytoplasm. An essential GTPase which binds GTP, GDP and possibly (p)ppGpp with moderate affinity, with high nucleotide exchange rates and a fairly low GTP hydrolysis rate. Plays a role in control of the cell cycle, stress response, ribosome biogenesis and in those bacteria that undergo differentiation, in morphogenesis control. This chain is GTPase Obg, found in Prochlorococcus marinus (strain MIT 9303).